We begin with the raw amino-acid sequence, 259 residues long: UPF0246 protein Aave_1172 (259 aa).

The protein belongs to the UPF0246 family.

The chain is UPF0246 protein Aave_1172 from Paracidovorax citrulli (strain AAC00-1) (Acidovorax citrulli).